The chain runs to 31 residues: Alcohol dehydrogenase 1 (31 aa).

C7 is a Zn(2+) binding site.

This sequence belongs to the zinc-containing alcohol dehydrogenase family. Class-P subfamily. Homodimer. Zn(2+) is required as a cofactor.

It localises to the cytoplasm. The enzyme catalyses a primary alcohol + NAD(+) = an aldehyde + NADH + H(+). It catalyses the reaction a secondary alcohol + NAD(+) = a ketone + NADH + H(+). The sequence is that of Alcohol dehydrogenase 1 from Catharanthus roseus (Madagascar periwinkle).